We begin with the raw amino-acid sequence, 403 residues long: Mitochondrial intermembrane space import and assembly protein 40 (403 aa).

A mitochondrion-targeting transit peptide spans Met1–Leu31. Topologically, residues Ala33 to Lys46 are mitochondrial matrix. The helical; Signal-anchor for type II membrane protein transmembrane segment at Thr47 to Pro66 threads the bilayer. Over Asn67–Pro403 the chain is Mitochondrial intermembrane. Basic and acidic residues-rich tracts occupy residues Arg75–Glu84, Asn101–Glu118, Glu147–Glu168, Ser206–Thr230, and Glu262–Gln271. Residues Arg75–Ile292 form a disordered region. Intrachain disulfides connect Cys296–Cys298, Cys307–Cys340, and Cys317–Cys330. A CHCH domain is found at His304–Tyr348. Short sequence motifs (cx9C motif) lie at residues Cys307–Cys317 and Cys330–Cys340. Positions Gln351–Pro403 are disordered. Over residues Thr369 to Ser378 the composition is skewed to polar residues. Positions Asn382–Pro403 are enriched in basic and acidic residues.

As to quaternary structure, monomer. Interacts with the FAD-linked sulfhydryl oxidase ERV1 and with the substrate proteins COX17, TIM9, and TIM13, forming transient intermolecular disulfide bridges. Interacts with FCJ1. Requires Cu(2+) as cofactor. The cofactor is Zn(2+).

It is found in the mitochondrion inner membrane. In terms of biological role, required for the import and folding of small cysteine-containing proteins (small Tim) in the mitochondrial intermembrane space (IMS). Forms a redox cycle with ERV1 that involves a disulfide relay system. Precursor proteins to be imported into the IMS are translocated in their reduced form into the mitochondria. The oxidized form of MIA40 forms a transient intermolecular disulfide bridge with the reduced precursor protein, resulting in oxidation of the precursor protein that now contains an intramolecular disulfide bond and is able to undergo folding in the IMS. Reduced MIA40 is reoxidized by FAD-linked sulfhydryl oxidase ERV1. This Saccharomyces cerevisiae (strain ATCC 204508 / S288c) (Baker's yeast) protein is Mitochondrial intermembrane space import and assembly protein 40 (MIA40).